The primary structure comprises 147 residues: uncharacterized protein (147 aa).

To M.pneumoniae MPN_465.

This is an uncharacterized protein from Mycoplasma pneumoniae (strain ATCC 29342 / M129 / Subtype 1) (Mycoplasmoides pneumoniae).